Consider the following 170-residue polypeptide: Protein FAM209 (170 aa).

The signal sequence occupies residues 1–20 (MRTLLRWCLFLSLCVSCACA). Residues 56–76 (WLGNKWLWLFVAIMIYVMLKF) traverse the membrane as a helical segment. The segment at 83-107 (KEQHPPGLRGCQLRSPPKKAQNISP) is disordered.

Interacts with DPY19L2. Interacts with CYLC1; the interaction may be relevant for proper acrosome attachment to the nuclear envelope. Predominately expressed in testis.

Its subcellular location is the nucleus inner membrane. Required for sperm acrosome biogenesis. The polypeptide is Protein FAM209 (Mus musculus (Mouse)).